Consider the following 181-residue polypeptide: Peptide deformylase (181 aa).

Residues C99 and H141 each coordinate Fe cation. Residue E142 is part of the active site. H145 contacts Fe cation.

It belongs to the polypeptide deformylase family. Fe(2+) is required as a cofactor.

The catalysed reaction is N-terminal N-formyl-L-methionyl-[peptide] + H2O = N-terminal L-methionyl-[peptide] + formate. Its function is as follows. Removes the formyl group from the N-terminal Met of newly synthesized proteins. Requires at least a dipeptide for an efficient rate of reaction. N-terminal L-methionine is a prerequisite for activity but the enzyme has broad specificity at other positions. The protein is Peptide deformylase of Chlamydia muridarum (strain MoPn / Nigg).